Consider the following 504-residue polypeptide: Nuclear hormone receptor family member nhr-80 (504 aa).

The segment at residues 27–103 is a DNA-binding region (nuclear receptor); sequence STRCLICSAQ…NGMKPGGVQP (77 aa). NR C4-type zinc fingers lie at residues 30–50 and 66–86; these read CLICSAQATGFHFEAQSCSAC and CITGRDDCNVHYSMHQICRSC. Residues 177–192 show a composition bias toward low complexity; that stretch reads SSSTSFSASTTTNYST. A disordered region spans residues 177–199; sequence SSSTSFSASTTTNYSTPGPSPMA. An NR LBD domain is found at 214 to 466; sequence EEMKLGERRR…KLVLQLLNLD (253 aa). The tract at residues 455–466 is AF-2; it reads LDKLVLQLLNLD.

It belongs to the nuclear hormone receptor family. Interacts with nuclear hormone receptor nhr-49; the interaction is direct. As to expression, expressed in the intestine and in some head and tail neurons, as well as the ventral nerve cord.

Its subcellular location is the nucleus. Functionally, transcription factor. Binds to regulatory elements and regulates transcription of target genes, including acyltransferase dgat-2. As part of a lysosome-to-nucleus retrograde lipid signaling pathway, acts as a direct nuclear receptor of oleoylethanolamide (OEA) and, acting in concert with nuclear hormone receptor nhr-49, activates the transcription of genes promoting longevity and mitochondrial beta-oxidation. Required to modulate expression of delta-9 fatty acid desaturases, thereby regulating lipid metabolism; in some contexts, acting in concert with nhr-49. Involved in modulation of lipid metabolism in response to the citrate-induced mitochondrial unfolded protein response (mtUPR), acting downstream of transcription factor dve-1 and ubiquitin-like protein 5. Plays a role in modulating mitochondrial morphology and function. Involved in positively modulating life-span in a germline-dependent manner, acting in concert with nuclear hormone receptor daf-12. Plays a role in transgenerational lipid accumulation in response to a high-fat diet. This is Nuclear hormone receptor family member nhr-80 from Caenorhabditis elegans.